We begin with the raw amino-acid sequence, 64 residues long: Translational regulator CsrA (64 aa).

The protein belongs to the CsrA/RsmA family. In terms of assembly, homodimer; the beta-strands of each monomer intercalate to form a hydrophobic core, while the alpha-helices form wings that extend away from the core.

The protein localises to the cytoplasm. Functionally, a key translational regulator that binds mRNA to regulate translation initiation and/or mRNA stability. Mediates global changes in gene expression, shifting from rapid growth to stress survival by linking envelope stress, the stringent response and the catabolite repression systems. Usually binds in the 5'-UTR; binding at or near the Shine-Dalgarno sequence prevents ribosome-binding, repressing translation, binding elsewhere in the 5'-UTR can activate translation and/or stabilize the mRNA. Its function is antagonized by small RNA(s). The chain is Translational regulator CsrA from Dichelobacter nodosus (strain VCS1703A).